Here is a 658-residue protein sequence, read N- to C-terminus: Phosphomethylpyrimidine synthase (658 aa).

The disordered stretch occupies residues 1-22; it reads MNNSTDAVNPAKKPQTRREKRE. Residues Asn248, Met277, Tyr306, His342, 362 to 364, 403 to 406, and Glu442 each bind substrate; these read SRG and DGLR. His446 lines the Zn(2+) pocket. A substrate-binding site is contributed by Tyr469. His510 contributes to the Zn(2+) binding site. [4Fe-4S] cluster-binding residues include Cys590, Cys593, and Cys598.

It belongs to the ThiC family. Homodimer. [4Fe-4S] cluster is required as a cofactor.

It carries out the reaction 5-amino-1-(5-phospho-beta-D-ribosyl)imidazole + S-adenosyl-L-methionine = 4-amino-2-methyl-5-(phosphooxymethyl)pyrimidine + CO + 5'-deoxyadenosine + formate + L-methionine + 3 H(+). Its pathway is cofactor biosynthesis; thiamine diphosphate biosynthesis. Catalyzes the synthesis of the hydroxymethylpyrimidine phosphate (HMP-P) moiety of thiamine from aminoimidazole ribotide (AIR) in a radical S-adenosyl-L-methionine (SAM)-dependent reaction. The sequence is that of Phosphomethylpyrimidine synthase from Colwellia psychrerythraea (strain 34H / ATCC BAA-681) (Vibrio psychroerythus).